Consider the following 315-residue polypeptide: tRNA dimethylallyltransferase (315 aa).

Residue 11–18 coordinates ATP; sequence GPTASGKS. 13 to 18 serves as a coordination point for substrate; sequence TASGKS. 2 interaction with substrate tRNA regions span residues 36–39 and 160–164; these read DSMQ and QRLIR.

It belongs to the IPP transferase family. Monomer. Mg(2+) is required as a cofactor.

The enzyme catalyses adenosine(37) in tRNA + dimethylallyl diphosphate = N(6)-dimethylallyladenosine(37) in tRNA + diphosphate. Catalyzes the transfer of a dimethylallyl group onto the adenine at position 37 in tRNAs that read codons beginning with uridine, leading to the formation of N6-(dimethylallyl)adenosine (i(6)A). This chain is tRNA dimethylallyltransferase, found in Rickettsia bellii (strain RML369-C).